We begin with the raw amino-acid sequence, 491 residues long: Probable V-type proton ATPase subunit B 1 (491 aa).

Residue arginine 380 coordinates ATP.

The protein belongs to the ATPase alpha/beta chains family. In terms of assembly, V-ATPase is a heteromultimeric enzyme made up of two complexes: the ATP-hydrolytic V1 complex and the proton translocation V0 complex. The V1 complex consists of three catalytic AB heterodimers that form a heterohexamer, three peripheral stalks each consisting of EG heterodimers, one central rotor including subunits D and F, and the regulatory subunits C and H. The proton translocation complex V0 consists of the proton transport subunit a, a ring of proteolipid subunits c9c'', rotary subunit d, subunits e and f, and the accessory subunits vah-19/Ac45 and vah-20/PRR.

In terms of biological role, non-catalytic subunit of the V1 complex of vacuolar(H+)-ATPase (V-ATPase), a multisubunit enzyme composed of a peripheral complex (V1) that hydrolyzes ATP and a membrane integral complex (V0) that translocates protons. V-ATPase is responsible for acidifying and maintaining the pH of intracellular compartments and in some cell types, is targeted to the plasma membrane, where it is responsible for acidifying the extracellular environment. Essential for the proper assembly and activity of V-ATPase. Required maternally for early embryogenesis and zygotically during morphogenesis. Specifically, involved in the clearance of apoptotic cell corpses in embryos. Also, during embryonic development, the V-ATPase is required to repress fusion of epidermal cells probably by negatively regulating eff-1-mediated cell fusion. In neurons, required for necrotic cell death by promoting intracellular acidification. Required for cell death induced by hypoxia. Required for acidification of synaptic vesicles and the release of neurotransmitters from adult neurons. This is Probable V-type proton ATPase subunit B 1 from Caenorhabditis briggsae.